Here is a 553-residue protein sequence, read N- to C-terminus: Phosphoglucomutase (553 aa).

The segment at 1-24 (MQATVKRYPTTPISGQTMGTSGLR) is disordered. Residues 11–20 (TPISGQTMGT) are compositionally biased toward polar residues. Residues Thr-20, Arg-24, 117–118 (SH), and Lys-131 each bind substrate. Ser-117 (phosphoserine intermediate) is an active-site residue. Residue Ser-117 coordinates Mg(2+). Residues Asp-289, Asp-291, and Asp-293 each contribute to the Mg(2+) site. Residues 293–294 (DR), Thr-352, 371–373 (EES), Lys-384, and Arg-509 contribute to the substrate site.

This sequence belongs to the phosphohexose mutase family. The cofactor is Mg(2+).

The protein localises to the cytoplasm. It catalyses the reaction alpha-D-glucose 1-phosphate = alpha-D-glucose 6-phosphate. Functionally, this enzyme participates in both the breakdown and synthesis of glucose. The chain is Phosphoglucomutase (pgm) from Entamoeba dispar.